The following is a 537-amino-acid chain: ATP synthase subunit beta 1 (537 aa).

Glycine 164–threonine 171 is an ATP binding site. Positions proline 471 to arginine 537 are disordered. Composition is skewed to polar residues over residues glutamine 473–proline 498 and isoleucine 507–glutamate 528.

It belongs to the ATPase alpha/beta chains family. F-type ATPases have 2 components, CF(1) - the catalytic core - and CF(0) - the membrane proton channel. CF(1) has five subunits: alpha(3), beta(3), gamma(1), delta(1), epsilon(1). CF(0) has three main subunits: a(1), b(2) and c(9-12). The alpha and beta chains form an alternating ring which encloses part of the gamma chain. CF(1) is attached to CF(0) by a central stalk formed by the gamma and epsilon chains, while a peripheral stalk is formed by the delta and b chains.

It is found in the cell inner membrane. The enzyme catalyses ATP + H2O + 4 H(+)(in) = ADP + phosphate + 5 H(+)(out). Functionally, produces ATP from ADP in the presence of a proton gradient across the membrane. The catalytic sites are hosted primarily by the beta subunits. This is ATP synthase subunit beta 1 from Pseudoalteromonas atlantica (strain T6c / ATCC BAA-1087).